We begin with the raw amino-acid sequence, 287 residues long: ATP synthase gamma chain (287 aa).

The protein belongs to the ATPase gamma chain family. In terms of assembly, F-type ATPases have 2 components, CF(1) - the catalytic core - and CF(0) - the membrane proton channel. CF(1) has five subunits: alpha(3), beta(3), gamma(1), delta(1), epsilon(1). CF(0) has three main subunits: a, b and c.

The protein localises to the cell inner membrane. In terms of biological role, produces ATP from ADP in the presence of a proton gradient across the membrane. The gamma chain is believed to be important in regulating ATPase activity and the flow of protons through the CF(0) complex. In Xanthomonas oryzae pv. oryzae (strain MAFF 311018), this protein is ATP synthase gamma chain.